The following is a 43-amino-acid chain: VTCDLLSFEAKGFAANHSLCAAHCLAIGRRGGSCERGVCICRR.

3 cysteine pairs are disulfide-bonded: cysteine 3-cysteine 34, cysteine 20-cysteine 39, and cysteine 24-cysteine 41.

The protein resides in the secreted. In terms of biological role, antibacterial peptide. Affects Gram-negative bacteria including methicillin-resistant Staphylococcus aureus. The protein is Defensin of Trypoxylus dichotomus (Japanese rhinoceros beetle).